The sequence spans 190 residues: MDPPVILHSPNCSCQFCSSELPSTHTCGSQDRTVPLHVEATAAGHMEAKNFSLQYVLLVAFVSVLLGFSFCVYLKSMSNDEASDMTYYYQDLNSVEIKLGKNPLDPEVIKAIHSFQEFPYGNIPSIRREAEFDVQNDESSAVVLSGSNNNRRQVASTPCENNVLLKLWKDDLSFTIIAVTVLVGAMLARC.

At methionine 1 to serine 52 the chain is on the cytoplasmic side. Residues leucine 53–tyrosine 73 traverse the membrane as a helical segment. Residues leucine 74–lysine 166 are Lumenal-facing. Phosphotyrosine occurs at positions 89 and 120. Residues tyrosine 89–asparagine 93 carry the Involved in plasmodesmata targeting and virus cell-to-cell movement motif. The helical transmembrane segment at leucine 167 to leucine 187 threads the bilayer. At alanine 188 to cysteine 190 the chain is on the cytoplasmic side.

This sequence belongs to the virgaviridae TGB3 movement protein family. As to quaternary structure, interacts with movement protein TGB2. TGB1-TGB3-TGB2 complex formation is enhanced by ATP hydrolysis.

It localises to the host cell junction. Its subcellular location is the host plasmodesma. The protein localises to the host endoplasmic reticulum membrane. The protein resides in the host cytoplasm. It is found in the host cytoskeleton. Participates in the transport of viral genome to neighboring plant cells directly through plasmodesmata, without any budding. TGBp2 and TGBp3 are necessary for intracellular delivery of TGBp1-containing vRNPs to plasmodesmata. Can gate plasmodesmata and increase their size exclusion limit. Induces host actin cytoskeleton network thickening, which probably plays a major role in virus cell-to-cell movement. The chain is Movement protein TGB3 from Solanum nigrum (Black nightshade).